The primary structure comprises 436 residues: 3-ketoacyl-CoA thiolase (436 aa).

Cys99 functions as the Acyl-thioester intermediate in the catalytic mechanism. Active-site proton acceptor residues include His392 and Cys422.

This sequence belongs to the thiolase-like superfamily. Thiolase family. As to quaternary structure, heterotetramer of two alpha chains (FadJ) and two beta chains (FadI).

It localises to the cytoplasm. The catalysed reaction is an acyl-CoA + acetyl-CoA = a 3-oxoacyl-CoA + CoA. It functions in the pathway lipid metabolism; fatty acid beta-oxidation. Catalyzes the final step of fatty acid oxidation in which acetyl-CoA is released and the CoA ester of a fatty acid two carbons shorter is formed. The polypeptide is 3-ketoacyl-CoA thiolase (Pseudoalteromonas atlantica (strain T6c / ATCC BAA-1087)).